Consider the following 110-residue polypeptide: Bowman-Birk type proteinase inhibitor (110 aa).

The first 19 residues, 1–19 (MVVLKVCLVLLFLVGGTTS), serve as a signal peptide directing secretion. Residues 20 to 39 (ANLRLSKLGLLMKSDHQHSN) constitute a propeptide that is removed on maturation. 7 disulfide bridges follow: Cys47–Cys101, Cys48–Cys63, Cys51–Cys97, Cys53–Cys61, Cys71–Cys78, Cys75–Cys90, and Cys80–Cys88.

The protein belongs to the Bowman-Birk serine protease inhibitor family.

Inhibitor of trypsin and of chymotrypsin. The sequence is that of Bowman-Birk type proteinase inhibitor from Glycine max (Soybean).